Consider the following 327-residue polypeptide: Flap endonuclease 1 (327 aa).

Positions Met1 to Arg98 are N-domain. Mg(2+) contacts are provided by Asp27, Asp80, Glu152, Glu154, Asp173, Asp175, and Asp226. The I-domain stretch occupies residues Glu116–Gly246. Residues Ser319–Phe327 form an interaction with PCNA region.

It belongs to the XPG/RAD2 endonuclease family. FEN1 subfamily. As to quaternary structure, interacts with PCNA. PCNA stimulates the nuclease activity without altering cleavage specificity. Mg(2+) serves as cofactor.

Structure-specific nuclease with 5'-flap endonuclease and 5'-3' exonuclease activities involved in DNA replication and repair. During DNA replication, cleaves the 5'-overhanging flap structure that is generated by displacement synthesis when DNA polymerase encounters the 5'-end of a downstream Okazaki fragment. Binds the unpaired 3'-DNA end and kinks the DNA to facilitate 5' cleavage specificity. Cleaves one nucleotide into the double-stranded DNA from the junction in flap DNA, leaving a nick for ligation. Also involved in the base excision repair (BER) pathway. Acts as a genome stabilization factor that prevents flaps from equilibrating into structures that lead to duplications and deletions. Also possesses 5'-3' exonuclease activity on nicked or gapped double-stranded DNA. This chain is Flap endonuclease 1, found in Methanobrevibacter smithii (strain ATCC 35061 / DSM 861 / OCM 144 / PS).